A 214-amino-acid polypeptide reads, in one-letter code: 3-demethoxyubiquinol 3-hydroxylase (214 aa).

Residues glutamate 63, glutamate 93, histidine 96, glutamate 145, glutamate 177, and histidine 180 each contribute to the Fe cation site.

The protein belongs to the COQ7 family. The cofactor is Fe cation.

It localises to the cell membrane. It carries out the reaction a 5-methoxy-2-methyl-3-(all-trans-polyprenyl)benzene-1,4-diol + AH2 + O2 = a 3-demethylubiquinol + A + H2O. It participates in cofactor biosynthesis; ubiquinone biosynthesis. Catalyzes the hydroxylation of 2-nonaprenyl-3-methyl-6-methoxy-1,4-benzoquinol during ubiquinone biosynthesis. The polypeptide is 3-demethoxyubiquinol 3-hydroxylase (Psychrobacter arcticus (strain DSM 17307 / VKM B-2377 / 273-4)).